We begin with the raw amino-acid sequence, 529 residues long: Membrane-bound lytic murein transglycosylase F (529 aa).

Residues 1–27 (MPIFNLHQLRNFLFIIATTLFLSACQI) form the signal peptide. The interval 28 to 287 (ESKPTSELDQ…RLEEKYIGHI (260 aa)) is non-LT domain. The segment at 288-529 (GSFDYVDTRA…QATLTTEVQP (242 aa)) is LT domain. E332 is a catalytic residue. Residues 510–529 (EALSPDVGVSQATLTTEVQP) form a disordered region. Positions 519 to 529 (SQATLTTEVQP) are enriched in polar residues.

In the N-terminal section; belongs to the bacterial solute-binding protein 3 family. The protein in the C-terminal section; belongs to the transglycosylase Slt family.

It localises to the cell outer membrane. The enzyme catalyses Exolytic cleavage of the (1-&gt;4)-beta-glycosidic linkage between N-acetylmuramic acid (MurNAc) and N-acetylglucosamine (GlcNAc) residues in peptidoglycan, from either the reducing or the non-reducing ends of the peptidoglycan chains, with concomitant formation of a 1,6-anhydrobond in the MurNAc residue.. In terms of biological role, murein-degrading enzyme that degrades murein glycan strands and insoluble, high-molecular weight murein sacculi, with the concomitant formation of a 1,6-anhydromuramoyl product. Lytic transglycosylases (LTs) play an integral role in the metabolism of the peptidoglycan (PG) sacculus. Their lytic action creates space within the PG sacculus to allow for its expansion as well as for the insertion of various structures such as secretion systems and flagella. This chain is Membrane-bound lytic murein transglycosylase F, found in Vibrio vulnificus (strain CMCP6).